A 44-amino-acid polypeptide reads, in one-letter code: Large ribosomal subunit protein bL34 (44 aa).

Belongs to the bacterial ribosomal protein bL34 family.

This is Large ribosomal subunit protein bL34 from Wolbachia sp. subsp. Brugia malayi (strain TRS).